The primary structure comprises 307 residues: Anchor protein (307 aa).

It localises to the virion. Anchors indirectly the receptor binding (RBP) protein (depolymerase) to the virion. The polypeptide is Anchor protein (Klebsiella phage KP34 (Bacteriophage KP34)).